Reading from the N-terminus, the 303-residue chain is Histone deacetylase HDT2 (303 aa).

Over residues 100–112 (EMDLDSEDEEEEL) the composition is skewed to acidic residues. Residues 100–282 (EMDLDSEDEE…SGGSVPCKSC (183 aa)) form a disordered region. Residues 119–133 (ENGKADGKEEQKNQE) show a composition bias toward basic and acidic residues. Positions 154–203 (DSDDSDEDESDDSDEDDSDDSDEGEGLSPDEGDDDSSDEDDTSDDDEEET) are enriched in acidic residues. Basic and acidic residues predominate over residues 204–217 (PTPKKPEAGKKRGA). Residues 277–300 (VPCKSCSKTFNSEMALQAHSKAKH) form a C2H2-type zinc finger.

It belongs to the histone deacetylase HD2 family. In terms of assembly, multimer. Possibly forms a homotrimer with HDT1 and/or HDT3.

It is found in the nucleus. It localises to the nucleolus. Mediates the deacetylation of lysine residues on the N-terminal part of the core histones (H2A, H2B, H3 and H4). Histone deacetylation gives a tag for epigenetic repression and plays an important role in transcriptional regulation, cell cycle progression and developmental events. The polypeptide is Histone deacetylase HDT2 (HDT2) (Zea mays (Maize)).